Consider the following 951-residue polypeptide: PE-PGRS family protein PE_PGRS3 (951 aa).

In terms of domain architecture, PE spans 4–94 (VIAAPEVIAA…GAYAAAEAAA (91 aa)). Positions 887 to 919 (CRRQRRADRQRRQRRQRRQSRGHARCRRHRRAA) are enriched in basic residues. Residues 887-951 (CRRQRRADRQ…GISCSPQMMP (65 aa)) form a disordered region.

The protein belongs to the mycobacterial PE family. PGRS subfamily.

Its subcellular location is the cell outer membrane. The protein resides in the secreted. The protein localises to the cell wall. It is found in the cell surface. In terms of biological role, the arginine-rich C-terminal region protrudes from the mycobacterial membrane and mediates M.tuberculosis entry into host epithelial cells. May serve as a bridge between mycobacteria and host cells by interacting with specific host phospholipids and extracting them from host cells, for their direct integration or as a source of phosphate, during phases of TB pathogenesis when M.tuberculosis is short of phosphate supply. The chain is PE-PGRS family protein PE_PGRS3 (PE_PGRS3) from Mycobacterium tuberculosis (strain CDC 1551 / Oshkosh).